We begin with the raw amino-acid sequence, 84 residues long: Defensin-like protein 172 (84 aa).

The N-terminal stretch at 1 to 23 (MAKASSTLVLSIIFLVMFALVEQ) is a signal peptide. Disulfide bonds link Cys27/Cys74, Cys34/Cys56, Cys40/Cys68, and Cys44/Cys70.

It belongs to the DEFL family.

Its subcellular location is the secreted. This chain is Defensin-like protein 172 (LCR60), found in Arabidopsis thaliana (Mouse-ear cress).